The chain runs to 347 residues: Phenylalanine--tRNA ligase alpha subunit (347 aa).

A Mg(2+)-binding site is contributed by Glu261.

The protein belongs to the class-II aminoacyl-tRNA synthetase family. Phe-tRNA synthetase alpha subunit type 1 subfamily. In terms of assembly, tetramer of two alpha and two beta subunits. It depends on Mg(2+) as a cofactor.

The protein resides in the cytoplasm. The catalysed reaction is tRNA(Phe) + L-phenylalanine + ATP = L-phenylalanyl-tRNA(Phe) + AMP + diphosphate + H(+). The chain is Phenylalanine--tRNA ligase alpha subunit from Streptococcus thermophilus (strain CNRZ 1066).